Here is a 252-residue protein sequence, read N- to C-terminus: 2-succinyl-6-hydroxy-2,4-cyclohexadiene-1-carboxylate synthase (252 aa).

This sequence belongs to the AB hydrolase superfamily. MenH family. In terms of assembly, monomer.

It carries out the reaction 5-enolpyruvoyl-6-hydroxy-2-succinyl-cyclohex-3-ene-1-carboxylate = (1R,6R)-6-hydroxy-2-succinyl-cyclohexa-2,4-diene-1-carboxylate + pyruvate. It functions in the pathway quinol/quinone metabolism; 1,4-dihydroxy-2-naphthoate biosynthesis; 1,4-dihydroxy-2-naphthoate from chorismate: step 3/7. The protein operates within quinol/quinone metabolism; menaquinone biosynthesis. Catalyzes a proton abstraction reaction that results in 2,5-elimination of pyruvate from 2-succinyl-5-enolpyruvyl-6-hydroxy-3-cyclohexene-1-carboxylate (SEPHCHC) and the formation of 2-succinyl-6-hydroxy-2,4-cyclohexadiene-1-carboxylate (SHCHC). The protein is 2-succinyl-6-hydroxy-2,4-cyclohexadiene-1-carboxylate synthase of Salmonella choleraesuis (strain SC-B67).